The sequence spans 163 residues: Methyl-CpG-binding domain-containing protein 3 (163 aa).

The CW-type zinc-finger motif lies at 6–56 (TTLIDSYAAQCWKCLKVRSIESQEDYEEIRSKTLEKFFECKRCEEPGDMVM). The MBD domain occupies 65–137 (WFQDEHSIPK…EEVSFAAPKR (73 aa)). Residues 140 to 163 (LKKKPVDSHSSSRNTEEDGVSRDA) are disordered. Residues 153–163 (NTEEDGVSRDA) are compositionally biased toward basic and acidic residues.

The protein resides in the nucleus. Its function is as follows. Probable transcriptional regulator. This chain is Methyl-CpG-binding domain-containing protein 3 (MBD3), found in Arabidopsis thaliana (Mouse-ear cress).